The sequence spans 159 residues: Putative pre-16S rRNA nuclease (159 aa).

This sequence belongs to the YqgF nuclease family.

It localises to the cytoplasm. Functionally, could be a nuclease involved in processing of the 5'-end of pre-16S rRNA. This is Putative pre-16S rRNA nuclease from Agrobacterium fabrum (strain C58 / ATCC 33970) (Agrobacterium tumefaciens (strain C58)).